The following is a 161-amino-acid chain: Lipid droplet assembly factor 1 (161 aa).

The Cytoplasmic segment spans residues 1–43 (MAKEEPQSISRDLQELQKKLSLLIDSFQNNSKVVAFMKSPVGQ). Residues 44–61 (YLDSHPFLAFTLLVFIVM) form a helical membrane-spanning segment. Residues 62–67 (SAVPVG) lie on the Lumenal side of the membrane. A helical membrane pass occupies residues 68–87 (FFLLIVVLTTLAALLGVIIL). The Cytoplasmic portion of the chain corresponds to 88–93 (EGLVIS). A helical membrane pass occupies residues 94 to 110 (VGGFSLLCILCGLGFVS). Residues 111–116 (LAMSGM) are Lumenal-facing. Residues 117–133 (MIASYVVVSSLISCWFS) traverse the membrane as a helical segment. At 134-161 (PRPLTQQNTSCDFLPAMKSAEFEGLYQE) the chain is on the cytoplasmic side.

Belongs to the LDAF1 family. As to quaternary structure, interacts with isoform 1 and isoform 3 of BSCL2/seipin to form an oligomeric complex. Expressed at high levels in the heart and skeletal muscle. Expressed at low levels in kidney, small intestine, lung and liver.

Its subcellular location is the endoplasmic reticulum membrane. It is found in the lipid droplet. Functionally, plays an important role in the formation of lipid droplets (LD) which are storage organelles at the center of lipid and energy homeostasis. In association with BSCL2/seipin, defines the sites of LD formation in the endoplasmic reticulum. This is Lipid droplet assembly factor 1 from Homo sapiens (Human).